Reading from the N-terminus, the 309-residue chain is Olfactory receptor 1A2 (309 aa).

At 1–25 the chain is on the extracellular side; that stretch reads MKKENQSFNLDFILLGVTSQQEQNN. The N-linked (GlcNAc...) asparagine glycan is linked to Asn-5. A helical membrane pass occupies residues 26-49; it reads VFFVIFLCIYPITLTGNLLIILAI. At 50 to 57 the chain is on the cytoplasmic side; the sequence is CADIRLHN. A helical transmembrane segment spans residues 58–79; the sequence is PMYFLLANLSLVDIIFSSVTIP. Residues 80 to 100 are Extracellular-facing; it reads KVLANHLLGSKFISFGGCLMQ. Residues Cys-97 and Cys-189 are joined by a disulfide bond. The chain crosses the membrane as a helical span at residues 101–120; it reads MYFMIALAKADSYTLAAMAY. Over 121–139 the chain is Cytoplasmic; that stretch reads DRAVAISCPLHYTTIMSPR. Residues 140 to 158 form a helical membrane-spanning segment; the sequence is SCILLIAGSWVIGNTSALP. Over 159–195 the chain is Extracellular; it reads HTLLTASLSFCGNQEVANFYCDIMPLLKLSCSDVHFN. Residues 196–218 form a helical membrane-spanning segment; it reads VKMMYLGVGVFSLPLLCIIVSYV. At 219 to 235 the chain is on the cytoplasmic side; sequence QVFSTVFQVPSTKSLFK. A helical membrane pass occupies residues 236-258; it reads AFCTCGSHLTVVFLYYGTTMGMY. Residues 259–270 are Extracellular-facing; it reads FRPLTSYSPKDA. The helical transmembrane segment at 271 to 290 threads the bilayer; it reads VITVMYVAVTPALNPFIYSL. Residues 291-309 lie on the Cytoplasmic side of the membrane; it reads RNWDMKAALQKLFSKRISS.

It belongs to the G-protein coupled receptor 1 family.

The protein resides in the cell membrane. Functionally, odorant receptor. The chain is Olfactory receptor 1A2 (OR1A2) from Homo sapiens (Human).